Here is a 943-residue protein sequence, read N- to C-terminus: Isoleucine--tRNA ligase (943 aa).

A 'HIGH' region motif is present at residues proline 58–histidine 68. Position 567 (glutamate 567) interacts with L-isoleucyl-5'-AMP. The 'KMSKS' region motif lies at lysine 608 to serine 612. ATP is bound at residue lysine 611. Residues cysteine 906, cysteine 909, cysteine 926, and cysteine 929 each contribute to the Zn(2+) site.

It belongs to the class-I aminoacyl-tRNA synthetase family. IleS type 1 subfamily. In terms of assembly, monomer. Zn(2+) serves as cofactor.

The protein localises to the cytoplasm. The catalysed reaction is tRNA(Ile) + L-isoleucine + ATP = L-isoleucyl-tRNA(Ile) + AMP + diphosphate. Catalyzes the attachment of isoleucine to tRNA(Ile). As IleRS can inadvertently accommodate and process structurally similar amino acids such as valine, to avoid such errors it has two additional distinct tRNA(Ile)-dependent editing activities. One activity is designated as 'pretransfer' editing and involves the hydrolysis of activated Val-AMP. The other activity is designated 'posttransfer' editing and involves deacylation of mischarged Val-tRNA(Ile). The protein is Isoleucine--tRNA ligase of Pseudomonas aeruginosa (strain LESB58).